We begin with the raw amino-acid sequence, 139 residues long: uncharacterized protein (139 aa).

This sequence to S.typhimurium FliF.

Functionally, may be involved in the assembly, structure, or function of the flagellum. May polymerize to form a filamentous structure that is part of the flagellum. This is an uncharacterized protein from Bacillus subtilis (strain 168).